The primary structure comprises 306 residues: Tissue factor pathway inhibitor (306 aa).

Positions 1 to 28 are cleaved as a signal peptide; it reads MTYKMKKEYAFWATVCLLLSLVPEFLNA. BPTI/Kunitz inhibitor domains are found at residues 50–100, 121–171, and 225–275; these read CAMK…KKTC, CFLE…KKIC, and CLQP…LRSC. Cystine bridges form between C50–C100, C59–C83, C75–C96, C121–C171, C130–C154, C146–C167, C225–C275, C234–C258, and C250–C271. Residue N141 is glycosylated (N-linked (GlcNAc...) asparagine). N254, N264, and N282 each carry an N-linked (GlcNAc...) asparagine glycan.

In terms of tissue distribution, isoform alpha is expressed in heart and spleen; isoform beta in heart and lung.

Its subcellular location is the secreted. Its function is as follows. Inhibits factor X (X(a)) directly and, in a Xa-dependent way, inhibits VIIa/tissue factor activity, presumably by forming a quaternary Xa/LACI/VIIa/TF complex. It possesses an antithrombotic action and also the ability to associate with lipoproteins in plasma. This is Tissue factor pathway inhibitor (Tfpi) from Mus musculus (Mouse).